Consider the following 102-residue polypeptide: uncharacterized protein (102 aa).

This is an uncharacterized protein from Sulfolobus spindle-shape virus 1 (SSV1).